Reading from the N-terminus, the 220-residue chain is Probable septum site-determining protein MinC (220 aa).

Belongs to the MinC family. In terms of assembly, interacts with MinD and FtsZ.

Cell division inhibitor that blocks the formation of polar Z ring septums. Rapidly oscillates between the poles of the cell to destabilize FtsZ filaments that have formed before they mature into polar Z rings. Prevents FtsZ polymerization. This Vibrio campbellii (strain ATCC BAA-1116) protein is Probable septum site-determining protein MinC.